Consider the following 533-residue polypeptide: Spindle pole body protein CSA6 (533 aa).

2 disordered regions span residues 1–32 (MEDS…SDLT) and 53–130 (DKYD…QEDE). 2 stretches are compositionally biased toward basic and acidic residues: residues 18-30 (PEIK…KTSD) and 53-68 (DKYD…DLTP). Over residues 83 to 94 (PSKFSSSIPQKP) the composition is skewed to low complexity. Positions 103-121 (SSPTKNYTDHINQLRSGPN) are enriched in polar residues. Positions 136–236 (KYEIKRLKQE…RSERDELVKD (101 aa)) form a coiled coil. A compositionally biased stretch (basic and acidic residues) spans 309-318 (EKDKPSEDKT). Disordered regions lie at residues 309–329 (EKDK…SKDA) and 349–453 (SANS…QSTK). 2 stretches are compositionally biased toward polar residues: residues 349–392 (SANS…SNSQ) and 405–421 (IYSS…QSSH). A compositionally biased stretch (basic and acidic residues) spans 432 to 445 (PRVERDHWTDRPPS).

The protein resides in the cytoplasm. Its subcellular location is the cytoskeleton. The protein localises to the microtubule organizing center. It localises to the spindle pole body. Plays a role in mitotic spindle pole body organization, possibly at the point of spindle pole body separation. Required for mitotic exit. The protein is Spindle pole body protein CSA6 of Candida dubliniensis (strain CD36 / ATCC MYA-646 / CBS 7987 / NCPF 3949 / NRRL Y-17841) (Yeast).